Reading from the N-terminus, the 336-residue chain is N-acetyl-gamma-glutamyl-phosphate reductase (336 aa).

Cys143 is an active-site residue.

The protein belongs to the NAGSA dehydrogenase family. Type 1 subfamily.

It localises to the cytoplasm. It catalyses the reaction N-acetyl-L-glutamate 5-semialdehyde + phosphate + NADP(+) = N-acetyl-L-glutamyl 5-phosphate + NADPH + H(+). Its pathway is amino-acid biosynthesis; L-arginine biosynthesis; N(2)-acetyl-L-ornithine from L-glutamate: step 3/4. In terms of biological role, catalyzes the NADPH-dependent reduction of N-acetyl-5-glutamyl phosphate to yield N-acetyl-L-glutamate 5-semialdehyde. This is N-acetyl-gamma-glutamyl-phosphate reductase from Dictyoglomus thermophilum (strain ATCC 35947 / DSM 3960 / H-6-12).